Here is a 215-residue protein sequence, read N- to C-terminus: Uracil-DNA glycosylase (215 aa).

D59 acts as the Proton acceptor in catalysis.

This sequence belongs to the uracil-DNA glycosylase (UDG) superfamily. UNG family.

The protein resides in the cytoplasm. The catalysed reaction is Hydrolyzes single-stranded DNA or mismatched double-stranded DNA and polynucleotides, releasing free uracil.. Its function is as follows. Excises uracil residues from the DNA which can arise as a result of misincorporation of dUMP residues by DNA polymerase or due to deamination of cytosine. The polypeptide is Uracil-DNA glycosylase (Aliarcobacter butzleri (strain RM4018) (Arcobacter butzleri)).